Reading from the N-terminus, the 66-residue chain is Large ribosomal subunit protein bL35 (66 aa).

Residues methionine 1 to arginine 16 are compositionally biased toward basic residues. Residues methionine 1–glycine 21 form a disordered region.

It belongs to the bacterial ribosomal protein bL35 family.

This chain is Large ribosomal subunit protein bL35, found in Lactococcus lactis subsp. cremoris (strain MG1363).